Here is a 287-residue protein sequence, read N- to C-terminus: Nucleotide-binding protein VP2673 (287 aa).

ATP is bound at residue 8–15; sequence GHSGAGKS. Residue 56–59 coordinates GTP; that stretch reads DIRN.

The protein belongs to the RapZ-like family.

In terms of biological role, displays ATPase and GTPase activities. The sequence is that of Nucleotide-binding protein VP2673 from Vibrio parahaemolyticus serotype O3:K6 (strain RIMD 2210633).